We begin with the raw amino-acid sequence, 366 residues long: Quinolinate synthase (366 aa).

Residues histidine 44 and serine 61 each contribute to the iminosuccinate site. Cysteine 108 is a binding site for [4Fe-4S] cluster. Iminosuccinate contacts are provided by residues 139-141 (YIN) and serine 160. Cysteine 228 serves as a coordination point for [4Fe-4S] cluster. Residues 254–256 (HPE) and threonine 271 each bind iminosuccinate. Cysteine 318 is a binding site for [4Fe-4S] cluster.

The protein belongs to the quinolinate synthase family. Type 3 subfamily. [4Fe-4S] cluster is required as a cofactor.

The protein resides in the cytoplasm. It carries out the reaction iminosuccinate + dihydroxyacetone phosphate = quinolinate + phosphate + 2 H2O + H(+). It participates in cofactor biosynthesis; NAD(+) biosynthesis; quinolinate from iminoaspartate: step 1/1. In terms of biological role, catalyzes the condensation of iminoaspartate with dihydroxyacetone phosphate to form quinolinate. The chain is Quinolinate synthase from Listeria monocytogenes serotype 4b (strain F2365).